The sequence spans 641 residues: Single-strand DNA endonuclease 1 (641 aa).

The interval Met-1 to Arg-90 is N-domain. The segment at Gly-2–Ala-97 is XPG-N domain. Mg(2+) is bound by residues Asp-30, Asp-76, Glu-144, Glu-146, Asp-165, Asp-167, and Asp-217. Residues Met-132 to Asp-217 are XPG-I domain. I-domain stretches follow at residues Met-132–Asn-220 and Met-132–Gly-221. Positions Asp-217–Leu-350 are 5'-3' exonuclease domain. Disordered stretches follow at residues Lys-428–Val-448 and Val-572–His-615. Residues Asp-580–Ala-590 are compositionally biased toward gly residues.

The protein belongs to the XPG/RAD2 endonuclease family. GEN subfamily. Mg(2+) serves as cofactor. Highly expressed in shoot apical meristem (SAM) and young leaves. Expressed in roots, flag leaf and panicles.

It localises to the nucleus. In terms of biological role, single-stranded DNA endonuclease activity in vitro. May not be active as double-stranded DNA endonuclease. Endonuclease which cleaves flap structures at the junction between single-stranded DNA and double-stranded DNA with a specific cleavage site in the 5' overhang strand exactly one nucleotide 3' of the branch point. Structure- and sequence-specific nuclease that resolves holliday junctions (HJs) by symmetrically oriented incisions in two opposing strands near the junction point, thus leading to ligatable products; HJs are physical links between homologous DNA molecules that arise as central intermediary structures during homologous recombination and repair in meiotic and somatic cells. Probably involved in the resolution of toxic replication structures to ensure genome stability, and to maintain telomere integrity and replication. The polypeptide is Single-strand DNA endonuclease 1 (Oryza sativa subsp. japonica (Rice)).